The primary structure comprises 444 residues: 23S rRNA (uracil(1939)-C(5))-methyltransferase RlmD (444 aa).

The region spanning lysine 5 to serine 64 is the TRAM domain. [4Fe-4S] cluster contacts are provided by cysteine 77, cysteine 83, cysteine 86, and cysteine 166. The S-adenosyl-L-methionine site is built by glutamine 276, phenylalanine 305, asparagine 310, glutamate 326, asparagine 353, and aspartate 374. Cysteine 400 functions as the Nucleophile in the catalytic mechanism.

It belongs to the class I-like SAM-binding methyltransferase superfamily. RNA M5U methyltransferase family. RlmD subfamily.

The catalysed reaction is uridine(1939) in 23S rRNA + S-adenosyl-L-methionine = 5-methyluridine(1939) in 23S rRNA + S-adenosyl-L-homocysteine + H(+). Catalyzes the formation of 5-methyl-uridine at position 1939 (m5U1939) in 23S rRNA. The chain is 23S rRNA (uracil(1939)-C(5))-methyltransferase RlmD from Legionella pneumophila (strain Paris).